The sequence spans 1478 residues: GTPase-activating protein and VPS9 domain-containing protein 1 (1478 aa).

One can recognise a Ras-GAP domain in the interval 147–385; it reads SYLLQVLRYL…AAFLDVVIGG (239 aa). A Phosphoserine modification is found at Ser227. Residues Thr390 and Thr458 each carry the phosphothreonine modification. A Phosphotyrosine modification is found at Tyr460. Ser466 bears the Phosphoserine mark. Thr470 is modified (phosphothreonine). Phosphoserine is present on residues Ser566 and Ser569. Disordered regions lie at residues 574-608, 739-820, and 846-874; these read GISE…GSNG, ESCS…PPSQ, and HYAR…LPNF. Residues 578 to 588 are compositionally biased toward polar residues; it reads GPSNRSNSVSS. Phosphoserine is present on residues Ser742, Ser746, and Ser757. Residues 758–777 are compositionally biased toward polar residues; it reads SRPSTPGLSVVSGISATSED. Phosphothreonine is present on Thr762. Ser766 carries the phosphoserine modification. Positions 778–789 are enriched in basic and acidic residues; that stretch reads IPNKIEDLRSEC. Phosphoserine is present on residues Ser876, Ser902, Ser903, Ser908, Ser914, and Ser966. Over residues 889 to 902 the composition is skewed to basic and acidic residues; that stretch reads QRHSYPERLVRSRS. Disordered stretches follow at residues 889–1023 and 1043–1064; these read QRHS…PRLS and TSPS…DRDL. Composition is skewed to basic and acidic residues over residues 954–975 and 997–1008; these read DSSR…DRNR and EKQEKDKDDLGP. A compositionally biased stretch (polar residues) spans 1012 to 1023; that stretch reads STLTDDPSPRLS. Phosphoserine occurs at positions 1019, 1046, 1096, and 1103. Positions 1338-1478 constitute a VPS9 domain; it reads ILRDQVLHEH…EFIKTIDDRK (141 aa).

This sequence belongs to the GAPVD1 family. In terms of assembly, interacts with TRIP10/CIP4. Interacts with RAB5A. (Microbial infection) Interacts with P.falciparum (strain 3D7) CK1. As to expression, expressed in erythrocytes (at protein level).

The protein localises to the membrane. The protein resides in the endosome. Acts both as a GTPase-activating protein (GAP) and a guanine nucleotide exchange factor (GEF), and participates in various processes such as endocytosis, insulin receptor internalization or LC2A4/GLUT4 trafficking. Acts as a GEF for the Ras-related protein RAB31 by exchanging bound GDP for free GTP, leading to regulate LC2A4/GLUT4 trafficking. In the absence of insulin, it maintains RAB31 in an active state and promotes a futile cycle between LC2A4/GLUT4 storage vesicles and early endosomes, retaining LC2A4/GLUT4 inside the cells. Upon insulin stimulation, it is translocated to the plasma membrane, releasing LC2A4/GLUT4 from intracellular storage vesicles. Also involved in EGFR trafficking and degradation, possibly by promoting EGFR ubiquitination and subsequent degradation by the proteasome. Has GEF activity for Rab5 and GAP activity for Ras. This chain is GTPase-activating protein and VPS9 domain-containing protein 1 (GAPVD1), found in Homo sapiens (Human).